A 414-amino-acid chain; its full sequence is FAD-dependent monooxygenase adaC (414 aa).

Residues E32, A43, R115, D325, and G338 each contribute to the FAD site.

It belongs to the paxM FAD-dependent monooxygenase family. FAD is required as a cofactor.

It carries out the reaction 3-(2,4-dioxopentyl)-3,6,8,9-tetrahydroxy-1-oxo-1,2,3,4-tetrahydroanthracene-2-carboxyl-[ACP] + NADPH + O2 + H(+) = 3-(2,4-dioxopentyl)-2,3,6,8,9-pentahydroxy-1-oxo-1,2,3,4-tetrahydroanthracene-2-carboxyl-[ACP] + NADP(+) + H2O. It functions in the pathway secondary metabolite biosynthesis. FAD-dependent monooxygenase; part of the gene cluster that mediates the biosynthesis of the linear tetracyclic TAN-1612 neuropeptide Y receptor antagonist. The decaketide backbone of TAN-1612 is synthesized by the non-reducing polyketide synthase adaA via condensation of one acetyl-CoA starter unit with 9 malonyl-CoA units. The FAD-dependent monooxygenase adaC then performs hydroxylation at C2 while the polaketide chain is still attached to the NRPKS adaA. The alpha-hydroxylation step at C2 appears to be crucial for the following C18-C1 Claisen cyclization and release of the C9-hydroxyl version of TAN-1612 from the NRPKS adaA, two steps performed by the lactamase-like protein adaB. Finally, the O-methyltransferase adaD performs the C9 O-methylation to complete the biosynthesis of TAN-1612. The polypeptide is FAD-dependent monooxygenase adaC (Aspergillus niger).